The sequence spans 332 residues: Methionine synthase (332 aa).

Residues histidine 211, cysteine 213, and cysteine 296 each coordinate Zn(2+).

This sequence belongs to the archaeal MetE family. The cofactor is Zn(2+).

The protein operates within amino-acid biosynthesis; L-methionine biosynthesis via de novo pathway. Its function is as follows. Catalyzes the transfer of a methyl group to L-homocysteine resulting in methionine formation. The physiological methyl donor is unknown. This is Methionine synthase from Saccharolobus islandicus (strain Y.G.57.14 / Yellowstone #1) (Sulfolobus islandicus).